Reading from the N-terminus, the 247-residue chain is Ribonuclease PH (247 aa).

Phosphate is bound by residues Arg87 and 125–127; that span reads GTR.

Belongs to the RNase PH family. In terms of assembly, homohexameric ring arranged as a trimer of dimers.

It catalyses the reaction tRNA(n+1) + phosphate = tRNA(n) + a ribonucleoside 5'-diphosphate. Its function is as follows. Phosphorolytic 3'-5' exoribonuclease that plays an important role in tRNA 3'-end maturation. Removes nucleotide residues following the 3'-CCA terminus of tRNAs; can also add nucleotides to the ends of RNA molecules by using nucleoside diphosphates as substrates, but this may not be physiologically important. Probably plays a role in initiation of 16S rRNA degradation (leading to ribosome degradation) during starvation. The protein is Ribonuclease PH of Nostoc sp. (strain PCC 7120 / SAG 25.82 / UTEX 2576).